The sequence spans 225 residues: NAD(P)H-quinone oxidoreductase subunit K, chloroplastic (225 aa).

Cysteine 43, cysteine 44, cysteine 108, and cysteine 139 together coordinate [4Fe-4S] cluster.

Belongs to the complex I 20 kDa subunit family. In terms of assembly, NDH is composed of at least 16 different subunits, 5 of which are encoded in the nucleus. [4Fe-4S] cluster serves as cofactor.

The protein resides in the plastid. It localises to the chloroplast thylakoid membrane. It catalyses the reaction a plastoquinone + NADH + (n+1) H(+)(in) = a plastoquinol + NAD(+) + n H(+)(out). The catalysed reaction is a plastoquinone + NADPH + (n+1) H(+)(in) = a plastoquinol + NADP(+) + n H(+)(out). In terms of biological role, NDH shuttles electrons from NAD(P)H:plastoquinone, via FMN and iron-sulfur (Fe-S) centers, to quinones in the photosynthetic chain and possibly in a chloroplast respiratory chain. The immediate electron acceptor for the enzyme in this species is believed to be plastoquinone. Couples the redox reaction to proton translocation, and thus conserves the redox energy in a proton gradient. This is NAD(P)H-quinone oxidoreductase subunit K, chloroplastic from Nandina domestica (Heavenly bamboo).